We begin with the raw amino-acid sequence, 378 residues long: Diacetylchitobiose uptake system ATP-binding protein MsiK (378 aa).

An ABC transporter domain is found at 4-236 (VTFDKATRVY…PANLFVAGFI (233 aa)). Position 38 to 45 (38 to 45 (GPSGCGKS)) interacts with ATP.

The protein belongs to the ABC transporter superfamily. The DasABC-MsiK complex is composed of two ATP-binding proteins (MsiK), two transmembrane proteins (DasB and DasC) and a solute-binding protein (DasA). The NgcEFG-MsiK complex is composed of two ATP-binding proteins (MsiK), two transmembrane proteins (NgcF and NgcG) and a solute-binding protein (NgcE).

Its subcellular location is the cell membrane. In terms of biological role, part of the ABC transporter complexes DasABC-MsiK and NgcEFG-MsiK involved in N,N'-diacetylchitobiose ((GlcNAc)2) uptake. Responsible for energy coupling to the transport system. This Streptomyces coelicolor (strain ATCC BAA-471 / A3(2) / M145) protein is Diacetylchitobiose uptake system ATP-binding protein MsiK.